A 223-amino-acid polypeptide reads, in one-letter code: Ion-translocating oxidoreductase complex subunit E (223 aa).

The next 7 membrane-spanning stretches (helical) occupy residues 17-37 (SLVQ…TINA), 38-58 (IGLG…ISIL), 68-88 (IPIY…LLHA), 91-111 (FNLY…CIVV), 124-144 (VISF…MFVI), 156-176 (FLFG…FTFI), and 181-201 (TIIL…VIAF).

The protein belongs to the NqrDE/RnfAE family. The complex is composed of six subunits: RnfA, RnfB, RnfC, RnfD, RnfE and RnfG.

Its subcellular location is the cell inner membrane. Its function is as follows. Part of a membrane-bound complex that couples electron transfer with translocation of ions across the membrane. The protein is Ion-translocating oxidoreductase complex subunit E of Buchnera aphidicola subsp. Schizaphis graminum (strain Sg).